The primary structure comprises 429 residues: Cyclin-B2-3 (429 aa).

Positions 86-101 are enriched in basic and acidic residues; it reads ADHKPHIRDEETKKPD. Positions 86–109 are disordered; it reads ADHKPHIRDEETKKPDSVSSEEPE.

The protein belongs to the cyclin family. Cyclin AB subfamily.

In Arabidopsis thaliana (Mouse-ear cress), this protein is Cyclin-B2-3 (CYCB2-3).